A 636-amino-acid chain; its full sequence is Threonine--tRNA ligase (636 aa).

In terms of domain architecture, TGS spans 1–63; sequence MPMITITLPD…EHDASLRIIT (63 aa). The tract at residues 245 to 536 is catalytic; it reads DHRKIGKAQD…LIEHHAGAFP (292 aa). Zn(2+)-binding residues include cysteine 336, histidine 387, and histidine 513.

It belongs to the class-II aminoacyl-tRNA synthetase family. As to quaternary structure, homodimer. The cofactor is Zn(2+).

Its subcellular location is the cytoplasm. It catalyses the reaction tRNA(Thr) + L-threonine + ATP = L-threonyl-tRNA(Thr) + AMP + diphosphate + H(+). Functionally, catalyzes the attachment of threonine to tRNA(Thr) in a two-step reaction: L-threonine is first activated by ATP to form Thr-AMP and then transferred to the acceptor end of tRNA(Thr). Also edits incorrectly charged L-seryl-tRNA(Thr). The chain is Threonine--tRNA ligase from Xanthomonas campestris pv. campestris (strain 8004).